The following is a 130-amino-acid chain: Small ribosomal subunit protein uS9 (130 aa).

Belongs to the universal ribosomal protein uS9 family.

This Bacillus cytotoxicus (strain DSM 22905 / CIP 110041 / 391-98 / NVH 391-98) protein is Small ribosomal subunit protein uS9.